We begin with the raw amino-acid sequence, 695 residues long: MFLGTGEPALDTGDDSLSAVTFDSDVETKAKRKAFHKPPPTSPKSPYLSKPRKVASWRSLRTAGSMPLGGRASLTPQKLWLGTAKPGSLTQALNSPLTWEHAWTGVPGGTPDCLTDTFRVKRPHLRRSASNGHVPGTPVYREKEDMYDEIIELKKSLHVQKSDVDLMRTKLRRLEEENSRKDRQIEQLLDPSRGTDFVRTLAEKRPDASWVINGLKQRILKLEQQCKEKDGTISKLQTDMKTTNLEEMRIAMETYYEEVHRLQTLLASSETTGKKPLGEKKTGAKRQKKMGSALLSLSRSVQELTEENQSLKEDLDRVLSTSPTISKTQGYVEWSKPRLLRRIVELEKKLSVMESSKSHAAEPVRSHPPACLASSSALHRQPRGDRNKDHERLRGAVRDLKEERTALQEQLLQRDLEVKQLLQAKADLEKELECAREGEEERREREEVLREEIQTLTSKLQELQEMKKEEKEDCPEVPHKAQELPAPTPSSRHCEQDWPPDSSEEGLPRPRSPCSDGRRDAAARVLQAQWKVYKHKKKKAVLDEAAVVLQAAFRGHLTRTKLLASKAHGSEPPSVPGLPDQSSPVPRVPSPIAQATGSPVQEEAIVIIQSALRAHLARARHSATGKRTTTAASTRRRSASATHGDASSPPFLAALPDPSPSGPQALAPLPGDDVNSDDSDDIVIAPSLPTKNFPV.

The tract at residues 29–55 (KAKRKAFHKPPPTSPKSPYLSKPRKVA) is disordered. Coiled-coil stretches lie at residues 157 to 264 (LHVQ…RLQT), 292 to 358 (SALL…SSKS), and 387 to 477 (NKDH…CPEV). S322 carries the phosphoserine modification. 4 disordered regions span residues 357-390 (KSHA…NKDH), 465-521 (EMKK…RRDA), 564-599 (ASKA…TGSP), and 618-695 (RARH…NFPV). Positions 465-482 (EMKKEEKEDCPEVPHKAQ) are enriched in basic and acidic residues. IQ domains follow at residues 542–571 (LDEA…HGSE) and 601–630 (QEEA…RTTT).

Component of the EvC complex composed of EFCAB7, IQCE, EVC2 and EVC; built from two subcomplexes, EVC2:EVC and EFCAB7:IQCE. Interacts (via N-terminus) with EFCAB7 (via EF-hands 1 and 2); this interaction anchors the EVC-EVC2 complex in a signaling microdomain at the base of cilia and stimulates the Hedgehog (Hh) pathway. Interacts with EVC2 (via N-terminal end). Interacts with EVC.

The protein localises to the cell projection. Its subcellular location is the cilium membrane. Component of the EvC complex that positively regulates ciliary Hedgehog (Hh) signaling. Required for proper limb morphogenesis. This Homo sapiens (Human) protein is IQ domain-containing protein E (IQCE).